The chain runs to 387 residues: Succinate--CoA ligase [ADP-forming] subunit beta (387 aa).

The ATP-grasp domain occupies R9–K236. ATP-binding positions include K45, G52–G54, A94, and E99. Residues N191 and D205 each coordinate Mg(2+). Residues N256 and G318–T320 contribute to the substrate site.

Belongs to the succinate/malate CoA ligase beta subunit family. Heterotetramer of two alpha and two beta subunits. It depends on Mg(2+) as a cofactor.

The catalysed reaction is succinate + ATP + CoA = succinyl-CoA + ADP + phosphate. The enzyme catalyses GTP + succinate + CoA = succinyl-CoA + GDP + phosphate. The protein operates within carbohydrate metabolism; tricarboxylic acid cycle; succinate from succinyl-CoA (ligase route): step 1/1. Functionally, succinyl-CoA synthetase functions in the citric acid cycle (TCA), coupling the hydrolysis of succinyl-CoA to the synthesis of either ATP or GTP and thus represents the only step of substrate-level phosphorylation in the TCA. The beta subunit provides nucleotide specificity of the enzyme and binds the substrate succinate, while the binding sites for coenzyme A and phosphate are found in the alpha subunit. The sequence is that of Succinate--CoA ligase [ADP-forming] subunit beta from Leifsonia xyli subsp. xyli (strain CTCB07).